Here is a 398-residue protein sequence, read N- to C-terminus: Phosphoglycerate kinase (398 aa).

Substrate-binding positions include 21 to 23 (DFN), R36, 59 to 62 (HLGR), R119, and R157. Residues K208, G296, E327, and 354 to 357 (GGDS) each bind ATP.

The protein belongs to the phosphoglycerate kinase family. Monomer.

It localises to the cytoplasm. The catalysed reaction is (2R)-3-phosphoglycerate + ATP = (2R)-3-phospho-glyceroyl phosphate + ADP. It functions in the pathway carbohydrate degradation; glycolysis; pyruvate from D-glyceraldehyde 3-phosphate: step 2/5. This chain is Phosphoglycerate kinase, found in Streptococcus pneumoniae serotype 2 (strain D39 / NCTC 7466).